The following is a 430-amino-acid chain: Sulfide-quinone reductase (430 aa).

FAD is bound by residues 9–13 (GGGVG), 34–36 (SDR), 42–43 (TP), and T105. C156 serves as the catalytic Cysteine persulfide intermediate. Intrachain disulfides connect C280-C422 and C419-C430. Residues V294 and G314 each contribute to the FAD site. I346 contacts a quinone. Residue C347 is the Cysteine persulfide intermediate of the active site. FAD is bound at residue K382.

It belongs to the SQRD family. Homotrimer. Requires FAD as cofactor.

It is found in the membrane. The enzyme catalyses n a quinone + n hydrogen sulfide + n H(+) = polysulfur(n-2) + n a quinol. Its function is as follows. Catalyzes the oxidation of hydrogen sulfide, with the help of a quinone. Consecutive reaction cycles lead to the accumulation of a polysulfide product on the active site Cys residues; these products are released when they exceed a critical length, typically as cyclooctasulfur. This chain is Sulfide-quinone reductase, found in Aquifex aeolicus (strain VF5).